A 90-amino-acid chain; its full sequence is Conotoxin Ca8.2 (90 aa).

Positions 1 to 21 (MMLKMGAMFVLLLLFILPSSQ) are cleaved as a signal peptide. The propeptide occupies 22 to 46 (QEGDVQARKTHLKRGFYGTLAMSTR). Gln-89 is subject to Glutamine amide.

The protein belongs to the conotoxin S superfamily. Post-translationally, contains 5 disulfide bonds. Expressed by the venom duct.

The protein resides in the secreted. In Conus caracteristicus (Characteristic cone), this protein is Conotoxin Ca8.2.